The following is a 498-amino-acid chain: Sulfate adenylyltransferase subunit 1 (498 aa).

Residues 30-246 enclose the tr-type G domain; that stretch reads TRPLRLITCG…LELATTRSAQ (217 aa). The interval 39–46 is G1; that stretch reads GSVDDGKS. Residue 39-46 coordinates GTP; sequence GSVDDGKS. The interval 97-101 is G2; the sequence is GITID. Residues 118-121 form a G3 region; it reads DTPG. Residues 118-122 and 173-176 contribute to the GTP site; these read DTPGH and NKID. A G4 region spans residues 173–176; sequence NKID. Positions 210-212 are G5; sequence SAL.

It belongs to the TRAFAC class translation factor GTPase superfamily. Classic translation factor GTPase family. CysN/NodQ subfamily. Heterodimer composed of CysD, the smaller subunit, and CysN.

It carries out the reaction sulfate + ATP + H(+) = adenosine 5'-phosphosulfate + diphosphate. The protein operates within sulfur metabolism; hydrogen sulfide biosynthesis; sulfite from sulfate: step 1/3. In terms of biological role, with CysD forms the ATP sulfurylase (ATPS) that catalyzes the adenylation of sulfate producing adenosine 5'-phosphosulfate (APS) and diphosphate, the first enzymatic step in sulfur assimilation pathway. APS synthesis involves the formation of a high-energy phosphoric-sulfuric acid anhydride bond driven by GTP hydrolysis by CysN coupled to ATP hydrolysis by CysD. The chain is Sulfate adenylyltransferase subunit 1 from Rhizobium meliloti (strain 1021) (Ensifer meliloti).